The following is a 534-amino-acid chain: CTP synthase (534 aa).

The interval 1-267 is amidoligase domain; it reads MTKYIFVTGG…DQIVCDHLKL (267 aa). S13 lines the CTP pocket. S13 lines the UTP pocket. Residue 14-19 participates in ATP binding; that stretch reads SIGKGI. Y54 lines the L-glutamine pocket. D71 is an ATP binding site. Residues D71 and E141 each contribute to the Mg(2+) site. CTP is bound by residues 148–150, 188–193, and K224; these read DIE and KTKPTQ. Residues 188-193 and K224 each bind UTP; that span reads KTKPTQ. The Glutamine amidotransferase type-1 domain occupies 292–534; it reads KIALVGKYVE…FVTAAVENAK (243 aa). G354 contacts L-glutamine. C381 functions as the Nucleophile; for glutamine hydrolysis in the catalytic mechanism. L-glutamine-binding positions include 382 to 385, E405, and R463; that span reads LGMQ. Catalysis depends on residues H508 and E510.

It belongs to the CTP synthase family. Homotetramer.

The catalysed reaction is UTP + L-glutamine + ATP + H2O = CTP + L-glutamate + ADP + phosphate + 2 H(+). It catalyses the reaction L-glutamine + H2O = L-glutamate + NH4(+). It carries out the reaction UTP + NH4(+) + ATP = CTP + ADP + phosphate + 2 H(+). The protein operates within pyrimidine metabolism; CTP biosynthesis via de novo pathway; CTP from UDP: step 2/2. Allosterically activated by GTP, when glutamine is the substrate; GTP has no effect on the reaction when ammonia is the substrate. The allosteric effector GTP functions by stabilizing the protein conformation that binds the tetrahedral intermediate(s) formed during glutamine hydrolysis. Inhibited by the product CTP, via allosteric rather than competitive inhibition. In terms of biological role, catalyzes the ATP-dependent amination of UTP to CTP with either L-glutamine or ammonia as the source of nitrogen. Regulates intracellular CTP levels through interactions with the four ribonucleotide triphosphates. The polypeptide is CTP synthase (Streptococcus thermophilus (strain ATCC BAA-250 / LMG 18311)).